We begin with the raw amino-acid sequence, 889 residues long: TATA box-binding protein-associated factor RNA polymerase I subunit B (889 aa).

The RRN7-type zinc-finger motif lies at 1 to 33 (MAPETNEKCKACGGFNFSMIDGFKYCDRCGTLL). 4 residues coordinate Zn(2+): cysteine 9, cysteine 12, cysteine 26, and cysteine 29. Residues 35–101 (NFEELEAEEG…DFFSRQALKN (67 aa)) are B-reader. The segment at 102-113 (DELAFPHESTPD) is B-linker. The interval 114-351 (YLYRLGLRLA…SAKEQETKEA (238 aa)) is N-terminal cyclin fold. A disordered region spans residues 229–253 (NLDLDSEEDEEEEENPNLNKSMENL). Acidic residues predominate over residues 230-243 (LDLDSEEDEEEEEN). Residues 352-510 (MTKVDYAEPY…LLVFRLTFDI (159 aa)) form a C-terminal cyclin fold region.

This sequence belongs to the RRN7/TAF1B family.

The protein localises to the nucleus. Its subcellular location is the nucleolus. Its function is as follows. Component of RNA polymerase I core factor complex that acts as a GTF2B/TFIIB-like factor and plays a key role in multiple steps during transcription initiation such as pre-initiation complex (PIC) assembly and postpolymerase recruitment events in polymerase I (Pol I) transcription. Binds rDNA promoters and plays a role in Pol I recruitment. In Caenorhabditis briggsae, this protein is TATA box-binding protein-associated factor RNA polymerase I subunit B.